The primary structure comprises 428 residues: Elongation factor 1-alpha (428 aa).

In terms of domain architecture, tr-type G spans 5–225 (KPILNVAFIG…DGFQPPEKPT (221 aa)). The tract at residues 14–21 (GHVDAGKS) is G1. 14–21 (GHVDAGKS) contacts GTP. Residue Ser21 participates in Mg(2+) binding. Positions 70-74 (GVTID) are G2. Positions 91-94 (DCPG) are G3. Residues 91-95 (DCPGH) and 149-152 (NKMD) each bind GTP. Residues 149 to 152 (NKMD) form a G4 region. The G5 stretch occupies residues 189–191 (ASL).

This sequence belongs to the TRAFAC class translation factor GTPase superfamily. Classic translation factor GTPase family. EF-Tu/EF-1A subfamily.

It is found in the cytoplasm. The enzyme catalyses GTP + H2O = GDP + phosphate + H(+). GTP hydrolase that promotes the GTP-dependent binding of aminoacyl-tRNA to the A-site of ribosomes during protein biosynthesis. The protein is Elongation factor 1-alpha of Methanococcus vannielii (strain ATCC 35089 / DSM 1224 / JCM 13029 / OCM 148 / SB).